We begin with the raw amino-acid sequence, 254 residues long: Phosphate import ATP-binding protein PstB (254 aa).

An ABC transporter domain is found at 7–249 (MVAESMSFYY…PREKQTEDYI (243 aa)). An ATP-binding site is contributed by 39–46 (GPSGCGKS).

Belongs to the ABC transporter superfamily. Phosphate importer (TC 3.A.1.7) family. In terms of assembly, the complex is composed of two ATP-binding proteins (PstB), two transmembrane proteins (PstC and PstA) and a solute-binding protein (PstS).

Its subcellular location is the cell inner membrane. The catalysed reaction is phosphate(out) + ATP + H2O = ADP + 2 phosphate(in) + H(+). In terms of biological role, part of the ABC transporter complex PstSACB involved in phosphate import. Responsible for energy coupling to the transport system. The chain is Phosphate import ATP-binding protein PstB from Chlorobium chlorochromatii (strain CaD3).